A 160-amino-acid polypeptide reads, in one-letter code: Putative NrdI-like protein (160 aa).

Belongs to the NrdI family.

This Streptococcus pyogenes serotype M3 (strain ATCC BAA-595 / MGAS315) protein is Putative NrdI-like protein.